We begin with the raw amino-acid sequence, 145 residues long: Ribosome maturation factor RimP (145 aa).

Belongs to the RimP family.

The protein localises to the cytoplasm. Its function is as follows. Required for maturation of 30S ribosomal subunits. This chain is Ribosome maturation factor RimP, found in Borrelia garinii subsp. bavariensis (strain ATCC BAA-2496 / DSM 23469 / PBi) (Borreliella bavariensis).